Here is a 618-residue protein sequence, read N- to C-terminus: 1-deoxy-D-xylulose-5-phosphate synthase (618 aa).

Residues histidine 76 and 117 to 119 (GHS) contribute to the thiamine diphosphate site. Aspartate 148 is a binding site for Mg(2+). Thiamine diphosphate contacts are provided by residues 149-150 (GA), asparagine 177, tyrosine 284, and glutamate 366. Asparagine 177 contacts Mg(2+).

The protein belongs to the transketolase family. DXPS subfamily. As to quaternary structure, homodimer. Requires Mg(2+) as cofactor. It depends on thiamine diphosphate as a cofactor.

The catalysed reaction is D-glyceraldehyde 3-phosphate + pyruvate + H(+) = 1-deoxy-D-xylulose 5-phosphate + CO2. Its pathway is metabolic intermediate biosynthesis; 1-deoxy-D-xylulose 5-phosphate biosynthesis; 1-deoxy-D-xylulose 5-phosphate from D-glyceraldehyde 3-phosphate and pyruvate: step 1/1. In terms of biological role, catalyzes the acyloin condensation reaction between C atoms 2 and 3 of pyruvate and glyceraldehyde 3-phosphate to yield 1-deoxy-D-xylulose-5-phosphate (DXP). This chain is 1-deoxy-D-xylulose-5-phosphate synthase, found in Dechloromonas aromatica (strain RCB).